A 1153-amino-acid chain; its full sequence is Error-prone DNA polymerase (1153 aa).

Disordered regions lie at residues 1 to 39 and 64 to 89; these read MFYSCCVSIEPRDPASEPTPTPRRPLRKSQPRSFSQAQP and VGEGQRRTTSLDPAEAEGTGAEGASQ.

It belongs to the DNA polymerase type-C family. DnaE2 subfamily.

The protein localises to the cytoplasm. The catalysed reaction is DNA(n) + a 2'-deoxyribonucleoside 5'-triphosphate = DNA(n+1) + diphosphate. Its function is as follows. DNA polymerase involved in damage-induced mutagenesis and translesion synthesis (TLS). It is not the major replicative DNA polymerase. This Corynebacterium jeikeium (strain K411) protein is Error-prone DNA polymerase.